A 60-amino-acid chain; its full sequence is Large ribosomal subunit protein uL30 (60 aa).

Belongs to the universal ribosomal protein uL30 family. As to quaternary structure, part of the 50S ribosomal subunit.

The sequence is that of Large ribosomal subunit protein uL30 from Alcanivorax borkumensis (strain ATCC 700651 / DSM 11573 / NCIMB 13689 / SK2).